The chain runs to 383 residues: uncharacterized protein (383 aa).

An N-terminal signal peptide occupies residues 1-23; it reads MKLTSIPIASTLLSLLAASGTLA.

This sequence belongs to the but2 family.

It is found in the cytoplasm. Its subcellular location is the nucleus. This is an uncharacterized protein from Schizosaccharomyces pombe (strain 972 / ATCC 24843) (Fission yeast).